The sequence spans 552 residues: Dihydroxy-acid dehydratase (552 aa).

D78 is a Mg(2+) binding site. [2Fe-2S] cluster is bound at residue C119. Positions 120 and 121 each coordinate Mg(2+). N6-carboxylysine is present on K121. C191 contributes to the [2Fe-2S] cluster binding site. A Mg(2+)-binding site is contributed by E442. S468 serves as the catalytic Proton acceptor.

Belongs to the IlvD/Edd family. In terms of assembly, homodimer. [2Fe-2S] cluster is required as a cofactor. Mg(2+) serves as cofactor.

It carries out the reaction (2R)-2,3-dihydroxy-3-methylbutanoate = 3-methyl-2-oxobutanoate + H2O. It catalyses the reaction (2R,3R)-2,3-dihydroxy-3-methylpentanoate = (S)-3-methyl-2-oxopentanoate + H2O. It functions in the pathway amino-acid biosynthesis; L-isoleucine biosynthesis; L-isoleucine from 2-oxobutanoate: step 3/4. It participates in amino-acid biosynthesis; L-valine biosynthesis; L-valine from pyruvate: step 3/4. Its function is as follows. Functions in the biosynthesis of branched-chain amino acids. Catalyzes the dehydration of (2R,3R)-2,3-dihydroxy-3-methylpentanoate (2,3-dihydroxy-3-methylvalerate) into 2-oxo-3-methylpentanoate (2-oxo-3-methylvalerate) and of (2R)-2,3-dihydroxy-3-methylbutanoate (2,3-dihydroxyisovalerate) into 2-oxo-3-methylbutanoate (2-oxoisovalerate), the penultimate precursor to L-isoleucine and L-valine, respectively. The protein is Dihydroxy-acid dehydratase of Caldicellulosiruptor saccharolyticus (strain ATCC 43494 / DSM 8903 / Tp8T 6331).